The following is a 2214-amino-acid chain: Non-reducing polyketide synthase dpmpA (2214 aa).

Positions glutamate 75–aspartate 178 are N-terminal acylcarrier protein transacylase domain (SAT). The Ketosynthase family 3 (KS3) domain occupies aspartate 372–glutamine 784. Residues cysteine 532, histidine 667, and histidine 707 each act as for beta-ketoacyl synthase activity in the active site. The tract at residues valine 888–proline 1184 is malonyl-CoA:ACP transacylase (MAT) domain. Catalysis depends on serine 974, which acts as the For acyl/malonyl transferase activity. The segment at proline 1255–arginine 1389 is N-terminal hotdog fold. The 312-residue stretch at proline 1255–glutamine 1566 folds into the PKS/mFAS DH domain. The segment at glycine 1265–valine 1560 is product template (PT) domain. The tract at residues glycine 1416–glutamine 1566 is C-terminal hotdog fold. Carrier domains follow at residues asparagine 1620–leucine 1695 and lysine 1722–aspartate 1802. Serine 1654 is subject to O-(pantetheine 4'-phosphoryl)serine. Residues valine 1698–glutamine 1728 form a disordered region. Residues aspartate 1711–glutamine 1726 show a composition bias toward polar residues. Serine 1762 carries the O-(pantetheine 4'-phosphoryl)serine modification. Positions glycine 1805–lysine 1827 are disordered. Positions serine 1810–lysine 1827 are enriched in basic and acidic residues. The methyltransferase (CMeT) domain stretch occupies residues phenylalanine 1958–isoleucine 2210.

The protein operates within secondary metabolite biosynthesis; terpenoid biosynthesis. Its function is as follows. Non-reducing polyketide synthase; part of the gene cluster that mediates the biosynthesis of diterpenoid pyrones. The first step of the pathway is the synthesis of the alpha-pyrone moiety by the polyketide synthase dpmpA via condensation of one acetyl-CoA starter unit with 3 malonyl-CoA units and 2 methylations. The alpha-pyrone is then combined with geranylgeranyl pyrophosphate (GGPP) formed by the GGPP synthase dpmpD through the action of the prenyltransferase dpmpC to yield a linear alpha-pyrone diterpenoid. Subsequent steps in the diterpenoid pyrone biosynthetic pathway involve the decalin core formation, which is initiated by the epoxidation of the C10-C11 olefin by the FAD-dependent oxidoreductase dpmpE, and is followed by a cyclization cascade catalyzed by the terpene cyclase dpmpB. The short chain dehydrogenase/reductase dpmpG then oxidizes the 8S hydroxy group to a ketone and the short chain dehydrogenase/reductase dpmpH reduces the ketone to the 8R hydroxy group to yield higginsianin B. Higginsianin B is further methylated by the methyltransferase dpmpI to produce the intermediate named FDDP B. The cytochrome P450 monooxygenase dpmpJ then oxidizes the C-26 methyl to primary alcohol, producing the final diterpenoid pyrone with a C-26 primary alcohol on the gamma-pyrone moiety named FDDP C. In Macrophomina phaseolina (strain MS6) (Charcoal rot fungus), this protein is Non-reducing polyketide synthase dpmpA.